The sequence spans 158 residues: Transcriptional regulator MraZ (158 aa).

SpoVT-AbrB domains lie at 5–52 and 91–134; these read IYET…TFSS and AVEC…SQAE.

This sequence belongs to the MraZ family. In terms of assembly, forms oligomers.

It is found in the cytoplasm. The protein resides in the nucleoid. This Geobacter sulfurreducens (strain ATCC 51573 / DSM 12127 / PCA) protein is Transcriptional regulator MraZ.